We begin with the raw amino-acid sequence, 825 residues long: Fibrous sheath CABYR-binding protein (825 aa).

2 disordered regions span residues 1-43 (MVGK…SYSA) and 113-139 (QDVE…RTGY). The segment covering 21–40 (KSSSPKATHRIGNTSGSKGS) has biased composition (polar residues). Phosphoserine is present on S160. 3 disordered regions span residues 168-232 (SRPD…LLED), 244-718 (QEGS…DKHS), and 732-751 (GEAS…EDEA). Polar residues predominate over residues 200 to 220 (PATNSNEEIGQKNISRTSFTQ). The span at 277–290 (ATAKAEPRPAEETH) shows a compositional bias: basic and acidic residues. Low complexity-rich tracts occupy residues 348–357 (AEILPPSAEE) and 398–407 (PLPAEGALEE). Pro residues predominate over residues 610–676 (VQPPPAEEAP…PAEVQPPPAE (67 aa)).

Interacts with CABYR. Interacts with ROPN1 and ROPN1L; the interaction increases upon spermatozoa capacitation conditions. In terms of processing, phosphorylated by PKA upon spermatozoa capacitation conditions.

The protein resides in the cell projection. Its subcellular location is the cilium. It localises to the flagellum. Its function is as follows. May be involved in the later stages of fibrous sheath biogenesis and spermatozoa capacitation. Inhibits ROPN1 and ROPN1L SUMOylation. Binds calcium. This chain is Fibrous sheath CABYR-binding protein (FSCB), found in Homo sapiens (Human).